Here is a 358-residue protein sequence, read N- to C-terminus: Thiol protease aleurain (358 aa).

An N-terminal signal peptide occupies residues 1–21 (MSAKTILSSVVLVVLVAASAA). The interval 22–42 (ANIGFDESNPIRMVSDGLREV) is interaction with VSR1. Positions 22–140 (ANIGFDESNP…KGSHKVTEAA (119 aa)) are cleaved as a propeptide — activation peptide. Asn125 is a glycosylation site (N-linked (GlcNAc...) asparagine). Intrachain disulfides connect Cys162-Cys205 and Cys196-Cys238. The active site involves Cys165. Asn254 carries N-linked (GlcNAc...) asparagine glycosylation. An intrachain disulfide couples Cys296 to Cys346. Residues His305 and Asn325 contribute to the active site.

Belongs to the peptidase C1 family. As to quaternary structure, interacts with VSR1/BP80B. In terms of tissue distribution, expressed in leaves (at protein level).

It localises to the vacuole. The enzyme catalyses Hydrolysis of proteins, acting as an aminopeptidase (notably, cleaving Arg-|-Xaa bonds) as well as an endopeptidase.. Functionally, may play a role in proteolysis leading to mobilization of nitrogen during senescence and starvation. The polypeptide is Thiol protease aleurain (Arabidopsis thaliana (Mouse-ear cress)).